A 502-amino-acid polypeptide reads, in one-letter code: ATP synthase subunit alpha (502 aa).

169-176 contacts ATP; sequence GDRQTGKT.

The protein belongs to the ATPase alpha/beta chains family. F-type ATPases have 2 components, CF(1) - the catalytic core - and CF(0) - the membrane proton channel. CF(1) has five subunits: alpha(3), beta(3), gamma(1), delta(1), epsilon(1). CF(0) has three main subunits: a(1), b(2) and c(9-12). The alpha and beta chains form an alternating ring which encloses part of the gamma chain. CF(1) is attached to CF(0) by a central stalk formed by the gamma and epsilon chains, while a peripheral stalk is formed by the delta and b chains.

The protein resides in the cell inner membrane. It carries out the reaction ATP + H2O + 4 H(+)(in) = ADP + phosphate + 5 H(+)(out). Produces ATP from ADP in the presence of a proton gradient across the membrane. The alpha chain is a regulatory subunit. The polypeptide is ATP synthase subunit alpha (Desulfovibrio desulfuricans (strain ATCC 27774 / DSM 6949 / MB)).